We begin with the raw amino-acid sequence, 117 residues long: Ig heavy chain V region MOPC 47A (117 aa).

The Ig-like domain maps to 1–113; it reads EVKLVESGGG…FAYWGZGTLV (113 aa).

This Mus musculus (Mouse) protein is Ig heavy chain V region MOPC 47A.